The chain runs to 521 residues: Ribonuclease Y (521 aa).

The helical transmembrane segment at 1–21 (MFFIEHPFVYLGLDLIVGCLI) threads the bilayer. Positions 211–271 (TVSMVPLPSD…VRREVARLAL (61 aa)) constitute a KH domain. Residues 337 to 430 (VLQHSLEVAF…VQAADALSGA (94 aa)) form the HD domain.

It belongs to the RNase Y family.

The protein resides in the cell membrane. Its function is as follows. Endoribonuclease that initiates mRNA decay. The polypeptide is Ribonuclease Y (Desulfotalea psychrophila (strain LSv54 / DSM 12343)).